We begin with the raw amino-acid sequence, 182 residues long: NADH-quinone oxidoreductase subunit B (182 aa).

[4Fe-4S] cluster is bound by residues cysteine 47, cysteine 48, cysteine 113, and cysteine 142.

Belongs to the complex I 20 kDa subunit family. NDH-1 is composed of 14 different subunits. Subunits NuoB, C, D, E, F, and G constitute the peripheral sector of the complex. [4Fe-4S] cluster is required as a cofactor.

Its subcellular location is the cell inner membrane. The enzyme catalyses a quinone + NADH + 5 H(+)(in) = a quinol + NAD(+) + 4 H(+)(out). In terms of biological role, NDH-1 shuttles electrons from NADH, via FMN and iron-sulfur (Fe-S) centers, to quinones in the respiratory chain. The immediate electron acceptor for the enzyme in this species is believed to be ubiquinone. Couples the redox reaction to proton translocation (for every two electrons transferred, four hydrogen ions are translocated across the cytoplasmic membrane), and thus conserves the redox energy in a proton gradient. This Anaeromyxobacter dehalogenans (strain 2CP-1 / ATCC BAA-258) protein is NADH-quinone oxidoreductase subunit B.